The following is a 107-amino-acid chain: Parvalbumin beta (107 aa).

Ser-1 is modified (N-acetylserine). 2 EF-hand domains span residues 37–72 and 76–107; these read KSLD…FSPS and LTDA…MIKA. The Ca(2+) site is built by Asp-50, Asp-52, Ser-54, Phe-56, Glu-58, Glu-61, Asp-89, Asp-91, Asp-93, Met-95, and Glu-100.

It belongs to the parvalbumin family.

In terms of biological role, in muscle, parvalbumin is thought to be involved in relaxation after contraction. It binds two calcium ions. The polypeptide is Parvalbumin beta (Esox lucius (Northern pike)).